A 257-amino-acid chain; its full sequence is Putative transcription factor R430 (257 aa).

Disordered stretches follow at residues 1-35 (MEKF…DNNS) and 58-77 (SLKS…PNKS). Over residues 7-25 (TDNTTDNTTDNTTDNTTDN) the composition is skewed to low complexity. A compositionally biased stretch (basic and acidic residues) spans 26–35 (TTDKLTDNNS).

It belongs to the nucleo-cytoplasmic large DNA viruses (NCLDVs) VLTF-3 family.

In terms of biological role, putative transcription factor. This Acanthamoeba polyphaga (Amoeba) protein is Putative transcription factor R430.